Consider the following 192-residue polypeptide: Protein Syd (192 aa).

Belongs to the Syd family.

The protein resides in the cell inner membrane. Its function is as follows. Interacts with the SecY protein in vivo. May bind preferentially to an uncomplexed state of SecY, thus functioning either as a chelating agent for excess SecY in the cell or as a regulatory factor that negatively controls the translocase function. The polypeptide is Protein Syd (Hahella chejuensis (strain KCTC 2396)).